Consider the following 97-residue polypeptide: Defensin-A2 (97 aa).

The N-terminal stretch at 1–19 is a signal peptide; the sequence is MRTLSLLLALLFLAAQTLA. A propeptide spanning residues 20-61 is cleaved from the precursor; the sequence is QPIDEGAEEVITEEPEITETQDPTTIMLIERGIGGDSTDATR. 3 disulfide bridges follow: cysteine 66–cysteine 93, cysteine 68–cysteine 82, and cysteine 72–cysteine 92. A propeptide spanning residues 96–97 is cleaved from the precursor; it reads TS.

This sequence belongs to the alpha-defensin family. As to expression, highly expressed in intestine, expressed at lower levels in spleen, and at very low levels in kidney and lung.

It localises to the secreted. Its function is as follows. Has antimicrobial activity. This chain is Defensin-A2, found in Ornithorhynchus anatinus (Duckbill platypus).